A 604-amino-acid chain; its full sequence is Sulfite reductase [NADPH] flavoprotein alpha-component (604 aa).

One can recognise a Flavodoxin-like domain in the interval 65–203 (VTILYGSQTG…AAGQWHADVL (139 aa)). FMN-binding positions include 71-76 (SQTGNG), 118-121 (STHG), and 154-163 (LGDSSYEFFC). An FAD-binding FR-type domain is found at 236–453 (QNPYSAEVLV…VEPNKHFRLP (218 aa)). Residues Thr-324, Leu-358, 392-395 (RLYS), 410-412 (TVA), and 425-428 (GGAS) contribute to the FAD site. NADP(+)-binding positions include 524–525 (SR), 530–534 (KIYVQ), and Asp-566. An FAD-binding site is contributed by Tyr-604.

This sequence belongs to the NADPH-dependent sulphite reductase flavoprotein subunit CysJ family. The protein in the N-terminal section; belongs to the flavodoxin family. It in the C-terminal section; belongs to the flavoprotein pyridine nucleotide cytochrome reductase family. As to quaternary structure, alpha(8)-beta(8). The alpha component is a flavoprotein, the beta component is a hemoprotein. It depends on FAD as a cofactor. FMN is required as a cofactor.

The enzyme catalyses hydrogen sulfide + 3 NADP(+) + 3 H2O = sulfite + 3 NADPH + 4 H(+). It participates in sulfur metabolism; hydrogen sulfide biosynthesis; hydrogen sulfide from sulfite (NADPH route): step 1/1. Component of the sulfite reductase complex that catalyzes the 6-electron reduction of sulfite to sulfide. This is one of several activities required for the biosynthesis of L-cysteine from sulfate. The flavoprotein component catalyzes the electron flow from NADPH -&gt; FAD -&gt; FMN to the hemoprotein component. The polypeptide is Sulfite reductase [NADPH] flavoprotein alpha-component (Shewanella sp. (strain MR-7)).